The chain runs to 427 residues: Glutamate-1-semialdehyde 2,1-aminomutase (427 aa).

An N6-(pyridoxal phosphate)lysine modification is found at lysine 265.

The protein belongs to the class-III pyridoxal-phosphate-dependent aminotransferase family. HemL subfamily. Homodimer. Requires pyridoxal 5'-phosphate as cofactor.

The protein resides in the cytoplasm. It carries out the reaction (S)-4-amino-5-oxopentanoate = 5-aminolevulinate. Its pathway is porphyrin-containing compound metabolism; protoporphyrin-IX biosynthesis; 5-aminolevulinate from L-glutamyl-tRNA(Glu): step 2/2. This chain is Glutamate-1-semialdehyde 2,1-aminomutase, found in Pseudomonas putida (strain ATCC 47054 / DSM 6125 / CFBP 8728 / NCIMB 11950 / KT2440).